Consider the following 421-residue polypeptide: Serine--tRNA ligase (421 aa).

Residue 227 to 229 (TSE) coordinates L-serine. ATP-binding positions include 257–259 (RRE) and V273. E280 lines the L-serine pocket. 344–347 (ELTS) lines the ATP pocket. T379 lines the L-serine pocket.

This sequence belongs to the class-II aminoacyl-tRNA synthetase family. Type-1 seryl-tRNA synthetase subfamily. As to quaternary structure, homodimer. The tRNA molecule binds across the dimer.

It is found in the cytoplasm. It carries out the reaction tRNA(Ser) + L-serine + ATP = L-seryl-tRNA(Ser) + AMP + diphosphate + H(+). The enzyme catalyses tRNA(Sec) + L-serine + ATP = L-seryl-tRNA(Sec) + AMP + diphosphate + H(+). The protein operates within aminoacyl-tRNA biosynthesis; selenocysteinyl-tRNA(Sec) biosynthesis; L-seryl-tRNA(Sec) from L-serine and tRNA(Sec): step 1/1. Functionally, catalyzes the attachment of serine to tRNA(Ser). Is also able to aminoacylate tRNA(Sec) with serine, to form the misacylated tRNA L-seryl-tRNA(Sec), which will be further converted into selenocysteinyl-tRNA(Sec). The polypeptide is Serine--tRNA ligase (Leifsonia xyli subsp. xyli (strain CTCB07)).